A 1085-amino-acid polypeptide reads, in one-letter code: DNA-directed RNA polymerase subunit beta (1085 aa).

Belongs to the RNA polymerase beta chain family. As to quaternary structure, in plastids the minimal PEP RNA polymerase catalytic core is composed of four subunits: alpha, beta, beta', and beta''. When a (nuclear-encoded) sigma factor is associated with the core the holoenzyme is formed, which can initiate transcription.

The protein resides in the plastid. The protein localises to the chloroplast. It catalyses the reaction RNA(n) + a ribonucleoside 5'-triphosphate = RNA(n+1) + diphosphate. Functionally, DNA-dependent RNA polymerase catalyzes the transcription of DNA into RNA using the four ribonucleoside triphosphates as substrates. This chain is DNA-directed RNA polymerase subunit beta, found in Physcomitrium patens (Spreading-leaved earth moss).